The following is a 576-amino-acid chain: DNA primase (576 aa).

The CHC2-type zinc finger occupies 40 to 64 (CPFHNEKTPSFNVVAKKQFYHCFGC). The region spanning 251 to 333 (DSIIVVEGYM…GLDAGFIFLP (83 aa)) is the Toprim domain. Mg(2+) contacts are provided by Glu-257, Asp-301, and Asp-303.

The protein belongs to the DnaG primase family. In terms of assembly, monomer. Interacts with DnaB. The cofactor is Zn(2+). Mg(2+) is required as a cofactor.

It carries out the reaction ssDNA + n NTP = ssDNA/pppN(pN)n-1 hybrid + (n-1) diphosphate.. In terms of biological role, RNA polymerase that catalyzes the synthesis of short RNA molecules used as primers for DNA polymerase during DNA replication. The polypeptide is DNA primase (Legionella pneumophila).